The primary structure comprises 144 residues: Ribosome maturation factor RimP (144 aa).

Belongs to the RimP family.

It is found in the cytoplasm. Its function is as follows. Required for maturation of 30S ribosomal subunits. In Methylobacillus flagellatus (strain ATCC 51484 / DSM 6875 / VKM B-1610 / KT), this protein is Ribosome maturation factor RimP.